The primary structure comprises 374 residues: Proteasomal ubiquitin receptor ADRM1 homolog (374 aa).

Positions Ser13–Pro131 constitute a Pru domain. Disordered stretches follow at residues Asp126 to Pro166, Ser187 to Ser223, and Ala334 to Asp374. Composition is skewed to polar residues over residues Ser141–Met163 and Pro209–Ser223. Residues Ser239–Ala346 enclose the DEUBAD domain. The span at Asp354–Asn368 shows a compositional bias: basic and acidic residues.

Belongs to the ADRM1 family. Component of the 19S proteasome regulatory particle complex. The 26S proteasome consists of a 20S core particle (CP) and two 19S regulatory subunits (RP). Interacts with deubiquitinase ubh-4.

It localises to the cytoplasm. The protein localises to the nucleus. Functionally, may function as a proteasomal ubiquitin receptor. May promote the deubiquitinating activity associated with the 26S proteasome. This chain is Proteasomal ubiquitin receptor ADRM1 homolog, found in Caenorhabditis elegans.